Consider the following 178-residue polypeptide: uncharacterized protein (178 aa).

The chain crosses the membrane as a helical span at residues 7–29; the sequence is FFVIFSILWGSLFLFSIIGSLGT.

The protein localises to the membrane. This is an uncharacterized protein from Bacillus subtilis (strain 168).